A 548-amino-acid chain; its full sequence is 5-epi-aristolochene synthase 1 (548 aa).

Mg(2+)-binding residues include aspartate 301, aspartate 305, aspartate 444, threonine 448, and glutamate 452. The short motif at 301 to 305 (DDTFD) is the DDXXD motif element.

It belongs to the terpene synthase family. Monomer. It depends on Mg(2+) as a cofactor. Expressed in roots, but not in shoots.

The protein localises to the cytoplasm. It catalyses the reaction (2E,6E)-farnesyl diphosphate = (+)-5-epi-aristolochene + diphosphate. The protein operates within secondary metabolite biosynthesis; terpenoid biosynthesis. Catalyzes the cyclization of trans,trans-farnesyl diphosphate (FPP) to the bicyclic intermediate 5-epi-aristolochene, initial step in the conversion of FPP to the sesquiterpenoid antifungal phytoalexin capsidiol. Produces germacrene A as an enzyme-bound intermediate that is not released by the enzyme, but is further cyclized to produce the bicyclic 5-epi-aristolochene. This Nicotiana attenuata (Coyote tobacco) protein is 5-epi-aristolochene synthase 1 (EAS).